Here is a 275-residue protein sequence, read N- to C-terminus: Ribosomal RNA small subunit methyltransferase A (275 aa).

Residues asparagine 15, leucine 17, glycine 42, glutamate 63, aspartate 88, and asparagine 111 each coordinate S-adenosyl-L-methionine.

It belongs to the class I-like SAM-binding methyltransferase superfamily. rRNA adenine N(6)-methyltransferase family. RsmA subfamily.

The protein resides in the cytoplasm. It carries out the reaction adenosine(1518)/adenosine(1519) in 16S rRNA + 4 S-adenosyl-L-methionine = N(6)-dimethyladenosine(1518)/N(6)-dimethyladenosine(1519) in 16S rRNA + 4 S-adenosyl-L-homocysteine + 4 H(+). Its function is as follows. Specifically dimethylates two adjacent adenosines (A1518 and A1519) in the loop of a conserved hairpin near the 3'-end of 16S rRNA in the 30S particle. May play a critical role in biogenesis of 30S subunits. The protein is Ribosomal RNA small subunit methyltransferase A of Geobacter metallireducens (strain ATCC 53774 / DSM 7210 / GS-15).